Here is a 563-residue protein sequence, read N- to C-terminus: Arginine--tRNA ligase (563 aa).

The short motif at 120 to 130 is the 'HIGH' region element; it reads PNIAKPFHIGH.

This sequence belongs to the class-I aminoacyl-tRNA synthetase family. In terms of assembly, monomer.

The protein localises to the cytoplasm. It carries out the reaction tRNA(Arg) + L-arginine + ATP = L-arginyl-tRNA(Arg) + AMP + diphosphate. The sequence is that of Arginine--tRNA ligase from Clostridium botulinum (strain Okra / Type B1).